The primary structure comprises 410 residues: Benzene 1,2-dioxygenase system ferredoxin--NAD(+) reductase subunit (410 aa).

4–35 (HVAIIGNGVAGFTTAQALRAEGYEGRISLIGE) serves as a coordination point for FAD. 145–173 (RLLIVGGGLIGCEVATTARKLGLSVTILE) serves as a coordination point for NAD(+).

Belongs to the bacterial ring-hydroxylating dioxygenase ferredoxin reductase family. As to quaternary structure, this dioxygenase system consists of four proteins: the two subunits of the hydroxylase component (BedC1 and BedC2), a ferredoxin (BedB) and a ferredoxin reductase (BedA). The cofactor is FAD.

The catalysed reaction is 2 reduced [2Fe-2S]-[ferredoxin] + NAD(+) + H(+) = 2 oxidized [2Fe-2S]-[ferredoxin] + NADH. The protein operates within aromatic compound metabolism; benzene degradation; catechol from benzene: step 1/2. Its function is as follows. Part of the electron transfer component of benzene 1,2-dioxygenase, transfers electrons from ferredoxin to NADH. The polypeptide is Benzene 1,2-dioxygenase system ferredoxin--NAD(+) reductase subunit (bedA) (Pseudomonas putida (Arthrobacter siderocapsulatus)).